We begin with the raw amino-acid sequence, 297 residues long: uncharacterized protein (297 aa).

Residues 267 to 297 (NTQHAGKPGAQHRTRRSPPAFRRADRLRQSA) are disordered. A compositionally biased stretch (basic and acidic residues) spans 288-297 (RRADRLRQSA).

This is an uncharacterized protein from Treponema pallidum (strain Nichols).